Here is a 77-residue protein sequence, read N- to C-terminus: Defensin-like protein 161 (77 aa).

The N-terminal stretch at 1–27 (MAKLSCSYLLVFMLVFSAILMVEKVEG) is a signal peptide. 4 cysteine pairs are disulfide-bonded: cysteine 30-cysteine 77, cysteine 40-cysteine 59, cysteine 45-cysteine 71, and cysteine 49-cysteine 73.

Belongs to the DEFL family.

The protein localises to the secreted. This Arabidopsis thaliana (Mouse-ear cress) protein is Defensin-like protein 161 (LCR27).